A 138-amino-acid chain; its full sequence is Biopolymer transport protein exbD1 (138 aa).

The Cytoplasmic segment spans residues 1–16 (MIKSSAKHNDFGLTPD). The chain crosses the membrane as a helical span at residues 17-37 (LTPLLDIIFIVMVFLLLTASV). The Periplasmic portion of the chain corresponds to 38–138 (RLESLEVALP…TQLLTEPSHS (101 aa)).

It belongs to the ExbD/TolR family. The accessory proteins ExbB and ExbD seem to form a complex with TonB.

It is found in the cell inner membrane. Its function is as follows. Involved in the TonB-dependent energy-dependent transport of various receptor-bound substrates. The chain is Biopolymer transport protein exbD1 (exbD1) from Vibrio cholerae serotype O1 (strain ATCC 39315 / El Tor Inaba N16961).